The following is a 161-amino-acid chain: Small ribosomal subunit protein uS19 (161 aa).

A compositionally biased stretch (basic residues) spans 1–19 (MARQKKYSGKGGARKKNKQ). The segment at 1–26 (MARQKKYSGKGGARKKNKQKQSVAPR) is disordered.

This sequence belongs to the universal ribosomal protein uS19 family.

In terms of biological role, protein S19 forms a complex with S13 that binds strongly to the 16S ribosomal RNA. The polypeptide is Small ribosomal subunit protein uS19 (Methanococcus maripaludis (strain C7 / ATCC BAA-1331)).